The primary structure comprises 258 residues: MLAKRIIPCLDVRDGQVVKGVQFRNHEIIGDIVPLAKRYAEEGADELVFYDITASSDGRVVDKSWVSRVAEVIDIPFCVAGGIKSLEDAAKILSFGADKISINSPALADPTLITRLADRFGVQCIVVGIDTWYDAETGKYHVNQYTGDESRTRVTQWETLDWVEEVQKRGAGEIVLNMMNQDGVRNGYDLEQLKKVREVCHVPLIASGGAGTMEHFLEAFRDADVDGALAASVFHKQIINIGELKAYLATQGVEIRIC.

Active-site residues include D11 and D130.

This sequence belongs to the HisA/HisF family. In terms of assembly, heterodimer of HisH and HisF.

It is found in the cytoplasm. The catalysed reaction is 5-[(5-phospho-1-deoxy-D-ribulos-1-ylimino)methylamino]-1-(5-phospho-beta-D-ribosyl)imidazole-4-carboxamide + L-glutamine = D-erythro-1-(imidazol-4-yl)glycerol 3-phosphate + 5-amino-1-(5-phospho-beta-D-ribosyl)imidazole-4-carboxamide + L-glutamate + H(+). Its pathway is amino-acid biosynthesis; L-histidine biosynthesis; L-histidine from 5-phospho-alpha-D-ribose 1-diphosphate: step 5/9. In terms of biological role, IGPS catalyzes the conversion of PRFAR and glutamine to IGP, AICAR and glutamate. The HisF subunit catalyzes the cyclization activity that produces IGP and AICAR from PRFAR using the ammonia provided by the HisH subunit. This chain is Imidazole glycerol phosphate synthase subunit HisF, found in Escherichia coli O1:K1 / APEC.